Here is a 428-residue protein sequence, read N- to C-terminus: Glycine reductase complex component B subunits alpha and beta (428 aa).

Catalysis depends on Cys242, which acts as the Schiff-base intermediate with substrate; via pyruvic acid. Pyruvic acid (Cys) is present on Cys242.

As to quaternary structure, heterohexamer of two alpha, two beta and two gamma subunits. Component of the glycine reductase complex, together with components A and C. PB is substrate specific. Post-translationally, the peptide chain is cleaved into beta and alpha chains, and the alpha chain N-terminal cysteine is deaminated and oxidized to form a reactive pyruvoyl group.

The catalysed reaction is acetyl phosphate + [thioredoxin]-disulfide + NH4(+) + H2O = [thioredoxin]-dithiol + glycine + phosphate + H(+). Its function is as follows. In the first step of glycine reductase, the substrate is bound to component PB via a Schiff base intermediate. Then the PB-activated substrate is nucleophilically attacked by the selenol anion of component PA to transform it to a carboxymethylated selenoether and the respective amine. By action of component PC, acetyl phosphate is formed, leaving component PA in its oxidized state. Finally component PA becomes reduced by the thioredoxin system to start a new catalytic cycle of reductive deamination. This Peptoclostridium acidaminophilum (Eubacterium acidaminophilum) protein is Glycine reductase complex component B subunits alpha and beta (grdE).